A 645-amino-acid polypeptide reads, in one-letter code: Envelope glycoprotein (645 aa).

An N-terminal signal peptide occupies residues 1–33; it reads MESPAFSKPLKDKINPWGPLIIMGILVRAGASV. Residues 32–237 are receptor-binding domain (RBD); sequence SVQRDSPHQV…QVLNVGPRVP (206 aa). Over 34 to 585 the chain is Extracellular; the sequence is QRDSPHQVFN…FNRSPWFTTL (552 aa). Residues Asn-43 and Asn-58 are each glycosylated (N-linked (GlcNAc...) asparagine; by host). 2 disulfides stabilise this stretch: Cys-113/Cys-130 and Cys-122/Cys-135. The tract at residues 259–286 is disordered; the sequence is PRPPRPPPSGAASMVPGAPPPSQQPGTG. A glycan (N-linked (GlcNAc...) asparagine; by host) is linked at Asn-301. Disulfide bonds link Cys-311–Cys-314, Cys-311–Cys-538, Cys-341–Cys-395, Cys-360–Cys-372, Cys-402–Cys-415, and Cys-530–Cys-537. The CXXC signature appears at 311–314; sequence CWLC. N-linked (GlcNAc...) asparagine; by host glycosylation is found at Asn-333 and Asn-340. N-linked (GlcNAc...) asparagine; by host glycans are attached at residues Asn-373 and Asn-409. The segment at 447–467 is fusion peptide; the sequence is VSLTLALLLGGLTMGGIAAGV. A coiled-coil region spans residues 490-510; sequence DLGALEKSVSALEKSLTSLSE. An immunosuppression region spans residues 513 to 529; that stretch reads LQNRRGLDLLFLKEGGL. A CX6CC motif is present at residues 530–538; it reads CAALKKECC. Residues 586 to 606 traverse the membrane as a helical segment; that stretch reads ISTIMGPLIVLLLILLFGPCI. Cys-605 is lipidated: S-palmitoyl cysteine; by host. Over 607 to 640 the chain is Cytoplasmic; sequence LNRLVQFVKDRISVVQALVLTQQYHQLKSIDPEE. The YXXL motif; contains endocytosis signal motif lies at 630 to 633; that stretch reads YHQL.

In terms of assembly, the mature envelope protein (Env) consists of a trimer of SU-TM heterodimers attached by a labile interchain disulfide bond. The activated Env consists of SU monomers and TM trimers. Specific enzymatic cleavages in vivo yield mature proteins. Envelope glycoproteins are synthesized as an inactive precursor that is N-glycosylated and processed likely by host cell furin or by a furin-like protease in the Golgi to yield the mature SU and TM proteins. The cleavage site between SU and TM requires the minimal sequence [KR]-X-[KR]-R. The R-peptide is released from the C-terminus of the cytoplasmic tail of the TM protein upon particle formation as a result of proteolytic cleavage by the viral protease. Cleavage of this peptide is required for TM to become fusogenic. In terms of processing, the CXXC motif is highly conserved across a broad range of retroviral envelope proteins. It is thought to participate in the formation of a labile disulfide bond possibly with the CX6CC motif present in the transmembrane protein. Isomerization of the intersubunit disulfide bond to an SU intrachain disulfide bond is thought to occur upon receptor recognition in order to allow membrane fusion. Post-translationally, the transmembrane protein is palmitoylated. The R-peptide is palmitoylated.

It localises to the virion membrane. The protein resides in the host cell membrane. The surface protein (SU) attaches the virus to the host cell by binding to its receptor. This interaction activates a thiol in a CXXC motif of the C-terminal domain, where the other Cys residue participates in the formation of the intersubunit disulfide. The activated thiol will attack the disulfide and cause its isomerization into a disulfide isomer within the motif. This leads to SU displacement and TM refolding, and is thought to activate its fusogenic potential by unmasking its fusion peptide. Fusion occurs at the host cell plasma membrane. Its function is as follows. The transmembrane protein (TM) acts as a class I viral fusion protein. Under the current model, the protein has at least 3 conformational states: pre-fusion native state, pre-hairpin intermediate state, and post-fusion hairpin state. During viral and target cell membrane fusion, the coiled coil regions (heptad repeats) assume a trimer-of-hairpins structure, positioning the fusion peptide in close proximity to the C-terminal region of the ectodomain. The formation of this structure appears to drive apposition and subsequent fusion of viral and target cell membranes. Membranes fusion leads to delivery of the nucleocapsid into the cytoplasm. This Xenotropic MuLV-related virus (isolate VP35) (XMRV) protein is Envelope glycoprotein (env).